Consider the following 346-residue polypeptide: Biotin synthase (346 aa).

The 219-residue stretch at 38-256 (RQVQVSTLLS…IAVARIMMPT (219 aa)) folds into the Radical SAM core domain. [4Fe-4S] cluster contacts are provided by Cys53, Cys57, and Cys60. Residues Cys97, Cys128, Cys188, and Arg260 each coordinate [2Fe-2S] cluster.

Belongs to the radical SAM superfamily. Biotin synthase family. Homodimer. It depends on [4Fe-4S] cluster as a cofactor. [2Fe-2S] cluster is required as a cofactor.

It catalyses the reaction (4R,5S)-dethiobiotin + (sulfur carrier)-SH + 2 reduced [2Fe-2S]-[ferredoxin] + 2 S-adenosyl-L-methionine = (sulfur carrier)-H + biotin + 2 5'-deoxyadenosine + 2 L-methionine + 2 oxidized [2Fe-2S]-[ferredoxin]. It functions in the pathway cofactor biosynthesis; biotin biosynthesis; biotin from 7,8-diaminononanoate: step 2/2. Functionally, catalyzes the conversion of dethiobiotin (DTB) to biotin by the insertion of a sulfur atom into dethiobiotin via a radical-based mechanism. The sequence is that of Biotin synthase from Escherichia fergusonii (strain ATCC 35469 / DSM 13698 / CCUG 18766 / IAM 14443 / JCM 21226 / LMG 7866 / NBRC 102419 / NCTC 12128 / CDC 0568-73).